The following is a 458-amino-acid chain: Cell death abnormality protein 8 (458 aa).

The Cytoplasmic segment spans residues 1 to 45; it reads MFLKKHKSKLLLVPRDEEQEDAGIVAVLTDRIPSVLLVRWFDLFC. The helical transmembrane segment at 46-66 threads the bilayer; sequence FGFAMCSYALDFFSDIGIAIF. Topologically, residues 67–77 are extracellular; it reads HFWAGRYLSGS. The chain crosses the membrane as a helical span at residues 78 to 98; it reads LVLAFALLPSVIINIISMVWM. At 99–123 the chain is on the cytoplasmic side; it reads LDDEMHWKRRAHPRRTGTFELNQKR. Residues 124–144 form a helical membrane-spanning segment; that stretch reads FIPLSKMIVLCICQMGPLFWY. At 145 to 219 the chain is on the extracellular side; the sequence is YKALYYGWMF…YYQTGTYPYW (75 aa). A helical membrane pass occupies residues 220–240; it reads LYFQAASLLLSIISISWSVVV. Residues 241 to 274 are Cytoplasmic-facing; sequence QNRSLRMIRDDKVNIWPHEAVLQFCWRFLTILAR. The next 2 helical transmembrane spans lie at 275 to 295 and 296 to 316; these read IITL…LISV and HLLV…DACT. Position 317 (His-317) is a topological domain, extracellular. A helical transmembrane segment spans residues 318–338; it reads IEKLLLLINTFIHIFIPFNMV. The Cytoplasmic portion of the chain corresponds to 339-353; sequence EGNTRWRYLTAYSVE. Residues 354–374 traverse the membrane as a helical segment; that stretch reads FIEMMLVCWLLPLSLNTFPYI. Residues 375 to 378 lie on the Extracellular side of the membrane; the sequence is EKVQ. A helical membrane pass occupies residues 379–399; the sequence is VGVPISFIAGIAIMMMYYQFF. Residues 400–458 lie on the Cytoplasmic side of the membrane; sequence HPNRRQLIVTQSQEDLSLNVQKSVETLTPKLESSLEISGEQNTSQDLVSELLLDVEHEN.

It belongs to the XK family. Cleavage by ced-3 activates ced-8 function in promoting phosphatidylserine exposure at the surface of apoptotic cells.

Its subcellular location is the cell membrane. The catalysed reaction is a 1,2-diacyl-sn-glycero-3-phospho-L-serine(in) = a 1,2-diacyl-sn-glycero-3-phospho-L-serine(out). In terms of biological role, phospholipid scramblase that acts downstream of ced-9 and caspase ced-3 to promote phosphatidylserine exposure on apoptotic cell surface. Phosphatidylserine is a specific marker only present at the surface of apoptotic cells and acts as a specific signal for engulfment. Regulates apoptosis kinetics during embryonic development. Not required for engulfment of germ cell corpses. The polypeptide is Cell death abnormality protein 8 (Caenorhabditis elegans).